Consider the following 442-residue polypeptide: Protein UNUSUAL FLORAL ORGANS (442 aa).

The segment at 1–85 (MDSTVFINNP…RFYSLLFSNT (85 aa)) is interaction with SKP1A. The F-box domain maps to 44 to 90 (GRIWSKLPPPLLDRVIAFLPPPAFFRTRCVCKRFYSLLFSNTFLETY).

Part of a putative SCF (ASK/Cullin/F-box) ubiquitin ligase complex. Interacts with SKP1A/ASK1, SKP1B/ASK2 and ASK11.

The protein localises to the nucleus. The protein operates within protein modification; protein ubiquitination. Its function is as follows. Component of SCF(ASK-cullin-F-box) E3 ubiquitin ligase complexes, which may mediate the ubiquitination and subsequent proteasomal degradation of target proteins. Considered as a meristem identity factor required for normal growth of the young floral meristem. Acts together with LEAFY to positively regulate the B class floral homeotic genes APETALA3 and PISTILLATA. In this way, operates as a region-specific regulator for petal and stamen development. Alternatively, may play a role as a negative regulator of the C class floral homeotic genes. Interacts together with the SKP1-like protein ASK1 to form a ubiquitin E3 ligase complex and could indirectly promote the ubiquitination and degradation of specific proteins controlling the floral primordia development like repressors of B class floral homeotic genes. This is Protein UNUSUAL FLORAL ORGANS (UFO) from Arabidopsis thaliana (Mouse-ear cress).